Reading from the N-terminus, the 350-residue chain is Neuronal-specific septin-3 (350 aa).

A compositionally biased stretch (basic and acidic residues) spans 1–10 (MSKGLPEART). Residues 1–29 (MSKGLPEARTDAAMSELVPEPRPKPAVPM) form a disordered region. Residues 58 to 331 (TGFDFNIMVV…ETYRAKRLND (274 aa)) form the Septin-type G domain. The segment at 68–75 (GQSGLGKS) is G1 motif. 68–75 (GQSGLGKS) provides a ligand contact to GTP. Ser91 carries the post-translational modification Phosphoserine. Thr102 is a GTP binding site. Residues 125 to 128 (DTPG) form a G3 motif region. Residues 207–210 (AKAD) are G4 motif. GTP-binding positions include 208 to 216 (KADTMTLEE), Gly265, and Arg280. The tract at residues 328–350 (RLNDNGGLPPVSVDTEESHDSNP) is disordered.

This sequence belongs to the TRAFAC class TrmE-Era-EngA-EngB-Septin-like GTPase superfamily. Septin GTPase family. In terms of assembly, septins polymerize into heterooligomeric protein complexes that form filaments, and can associate with cellular membranes, actin filaments and microtubules. GTPase activity is required for filament formation. In terms of processing, phosphorylated by PKG on serine residues. Phosphorylated by PKG on Ser-91. As to expression, expressed in the brain including the cerebrum, hippocampus and cerebellum (at protein level).

It localises to the cytoplasm. It is found in the cytoskeleton. The protein resides in the synapse. Its function is as follows. Filament-forming cytoskeletal GTPase. May play a role in cytokinesis (Potential). This is Neuronal-specific septin-3 from Mus musculus (Mouse).